A 481-amino-acid chain; its full sequence is Beta-amyrin 28-monooxygenase (481 aa).

Residues 4–24 form a helical membrane-spanning segment; it reads FYVPLLSLFVLFVSLSFYFLF. Heme is bound at residue Cys-428.

It belongs to the cytochrome P450 family. Requires heme as cofactor.

The protein resides in the membrane. The catalysed reaction is beta-amyrin + 3 reduced [NADPH--hemoprotein reductase] + 3 O2 = oleanolate + 3 oxidized [NADPH--hemoprotein reductase] + 4 H2O + 4 H(+). Its function is as follows. Catalyzes the oxidation of the methyl group to a carboxyl group at the C-28 position of beta-amyrin to form oleanolate. The polypeptide is Beta-amyrin 28-monooxygenase (Kalopanax septemlobus (Castor aralia)).